Consider the following 161-residue polypeptide: Cytochrome b6-f complex subunit 4 (161 aa).

A run of 3 helical transmembrane segments spans residues 37–57 (LLYI…GLAV), 96–116 (LLGV…PFIE), and 130–150 (AMTV…GAAF).

Belongs to the cytochrome b family. PetD subfamily. In terms of assembly, the 4 large subunits of the cytochrome b6-f complex are cytochrome b6, subunit IV (17 kDa polypeptide, PetD), cytochrome f and the Rieske protein, while the 4 small subunits are PetG, PetL, PetM and PetN. The complex functions as a dimer.

Its subcellular location is the cellular thylakoid membrane. Component of the cytochrome b6-f complex, which mediates electron transfer between photosystem II (PSII) and photosystem I (PSI), cyclic electron flow around PSI, and state transitions. This is Cytochrome b6-f complex subunit 4 from Synechococcus elongatus.